The chain runs to 333 residues: Glyceraldehyde-3-phosphate dehydrogenase (333 aa).

NAD(+) contacts are provided by residues 11–12 (RI), Asp-33, Arg-78, and Ser-120. Residues 149–151 (SCT), Thr-180, 209–210 (TG), and Arg-232 contribute to the D-glyceraldehyde 3-phosphate site. The active-site Nucleophile is the Cys-150. Residue Cys-150 is modified to S-nitrosocysteine. An NAD(+)-binding site is contributed by Asn-314.

Belongs to the glyceraldehyde-3-phosphate dehydrogenase family. As to quaternary structure, homotetramer. In terms of processing, S-nitrosylation of Cys-150 leads to translocation to the nucleus.

The protein localises to the cytoplasm. It is found in the cytosol. Its subcellular location is the cytoskeleton. The protein resides in the nucleus. It catalyses the reaction D-glyceraldehyde 3-phosphate + phosphate + NAD(+) = (2R)-3-phospho-glyceroyl phosphate + NADH + H(+). The catalysed reaction is S-nitroso-L-cysteinyl-[GAPDH] + L-cysteinyl-[protein] = L-cysteinyl-[GAPDH] + S-nitroso-L-cysteinyl-[protein]. It functions in the pathway carbohydrate degradation; glycolysis; pyruvate from D-glyceraldehyde 3-phosphate: step 1/5. In terms of biological role, has both glyceraldehyde-3-phosphate dehydrogenase and nitrosylase activities, thereby playing a role in glycolysis and nuclear functions, respectively. Glyceraldehyde-3-phosphate dehydrogenase is a key enzyme in glycolysis that catalyzes the first step of the pathway by converting D-glyceraldehyde 3-phosphate (G3P) into 3-phospho-D-glyceroyl phosphate. Participates in nuclear events including transcription, RNA transport, DNA replication and apoptosis. Nuclear functions are probably due to the nitrosylase activity that mediates cysteine S-nitrosylation of nuclear target proteins such as SIRT1, HDAC2 and PRKDC. The sequence is that of Glyceraldehyde-3-phosphate dehydrogenase from Danio rerio (Zebrafish).